We begin with the raw amino-acid sequence, 664 residues long: MAIVKKKKVSAASKAATEKPEVKKAVKRPVAETEAVTPKKKKLVKKVKKSAKKAHEEEPIEQVEKLQLIDDDEDGLEGLSFPGSDDEDLRDDYSDDDSDAGDHLPIEKKSAALDKQKEKIIAEGEEELQLNIANQATFELPTVEEIENEMKSVPNLEIVKQRIADVIQVLGDFKNRRDPQKSRENYVEVLKKDLCSQYGYNDYLMGKFMDLFPNGAELLEFLEANDNPRPVTIRANSLKVKRRDLAKNLINRGMNVDPAADWTKVGLVVYDSQVPVGATPEYLAGHYMIQGLNSLLPVMALAPQPGDRVLDMCSAPGGKTSHIAALMKNSGVLFANDANFTRCRAIIGNLHRLGVNNTVVCNLGGEEFSKIRPNGFDRILLDAPCSGTGVIWKDQSVKTSKDSQDVQRRHTMQRQLILSALDSLDANSPNGGYLVYSTCSVLVEENEAVVNFLLERRHCELVPTGLSIGVDGYTRFRDYRFHPSLSMTKRYYPHVHNIDGFYVAKIKKLSNAKMSKQGVMEKEKEKAAQKSQNKKNKAEAEASESSDDEEEKKNGVEVNGQKKPAKKQQQKKQKADGDDSDDDNNAPMKNIGSGARANKKRRNQKKAAEKQAAVKEDDGFNTVGNVKRAKKPTQFKSKVPKRAAARTGAKSVKNRRKKMLAKQQ.

The tract at residues M1–P105 is disordered. A compositionally biased stretch (basic residues) spans P38–K52. Residues K53–L68 show a composition bias toward basic and acidic residues. Residues S84–D99 are compositionally biased toward acidic residues. Residues C313–K319, D337, and D382 each bind S-adenosyl-L-methionine. The active-site Nucleophile is the C439. Residues K513–Q664 are disordered. Residues V519–A528 show a composition bias toward basic and acidic residues. The span at E541–E550 shows a compositional bias: acidic residues. The segment covering K563–K572 has biased composition (basic residues). A compositionally biased stretch (basic and acidic residues) spans K606 to D618. Composition is skewed to basic residues over residues K627–A644 and V652–Q664.

This sequence belongs to the class I-like SAM-binding methyltransferase superfamily. RsmB/NOP family.

It is found in the nucleus. The protein resides in the nucleolus. It carries out the reaction a cytidine in 26S rRNA + S-adenosyl-L-methionine = a 5-methylcytidine in 26S rRNA + S-adenosyl-L-homocysteine + H(+). Functionally, methyltransferase which methylates the carbon-5 position of cytosine 2982 to 5-methylcytosine (m5C2982) in 26S rRNA. May play a role in the translation of leucine and proline codons. May be required for the translation of specific mRNAs such as mRNAs involved in gonad development, collagen production and cuticle integrity. Plays a role in ensuring the correct localization of the germline-specific protein gld-1 during development. Not required for pre-rRNA processing, the production of mature 5S, 5.8S, 18S or 26S rRNAs or global translation. Plays a role in positively regulating fertility. This Caenorhabditis elegans protein is 26S rRNA (cytosine-C(5))-methyltransferase nsun-1.